The sequence spans 124 residues: Ribonuclease P protein component (124 aa).

The protein belongs to the RnpA family. As to quaternary structure, consists of a catalytic RNA component (M1 or rnpB) and a protein subunit.

It carries out the reaction Endonucleolytic cleavage of RNA, removing 5'-extranucleotides from tRNA precursor.. In terms of biological role, RNaseP catalyzes the removal of the 5'-leader sequence from pre-tRNA to produce the mature 5'-terminus. It can also cleave other RNA substrates such as 4.5S RNA. The protein component plays an auxiliary but essential role in vivo by binding to the 5'-leader sequence and broadening the substrate specificity of the ribozyme. The chain is Ribonuclease P protein component from Maridesulfovibrio salexigens (strain ATCC 14822 / DSM 2638 / NCIMB 8403 / VKM B-1763) (Desulfovibrio salexigens).